The sequence spans 783 residues: MAQAGFILTRHWRDTPQGTEVSFWLATDNGPLQVTLAPQESVAFIPADQVPRAQHILQGEQGFRLTPLALKDFHRQPVYGLYCRAHRQLMNYEKRLREGGVTVYEADVRPPERYLMERFITSPVWVEGDMHNGTIVNARLKPHPDYRPPLKWVSIDIETTRHGELYCIGLEGCGQRIVYMLGPENGDASSLDFELEYVASRPQLLEKLNAWFANYDPDVIIGWNVVQFDLRMLQKHAERYRLPLRLGRDNSELEWREHGFKNGVFFAQAKGRLIIDGIEALKSAFWNFSSFSLETVAQELLGEGKSIDNPWDRMDEIDRRFAEDKPALATYNLKDCELVTQIFHKTEIMPFLLERATVNGLPVDRHGGSVAAFGHLYFPRMHRAGYVAPNLGEVPPHASPGGYVMDSRPGLYDSVLVLDYKSLYPSIIRTFLIDPVGLVEGMAQPDPEHSTEGFLDAWFSREKHCLPEIVTNIWHGRDEAKRQGNKPLSQALKIIMNAFYGVLGTTACRFFDPRLASSITMRGHQIMRQTKALIEAQGYDVIYGDTDSTFVWLKGAHSEEEAAKIGRALVQHVNAWWAETLQKQRLTSALELEYETHFCRFLMPTIRGADTGSKKRYAGLIQEGDKQRMVFKGLETVRTDWTPLAQQFQQELYLRIFRNEPYQEYVRETIDKLMAGELDARLVYRKRLRRPLSEYQRNVPPHVRAARLADEENQKRGRPLQYQNRGTIKYVWTTNGPEPLDYQRSPLDYEHYLTRQLQPVAEGILPFIEDNFATLMTGQLGLF.

This sequence belongs to the DNA polymerase type-B family.

It catalyses the reaction DNA(n) + a 2'-deoxyribonucleoside 5'-triphosphate = DNA(n+1) + diphosphate. Its activity is regulated as follows. DNA polymerase II activity is regulated by the lexA gene during the SOS response. In terms of biological role, thought to be involved in DNA repair and/or mutagenesis. Its processivity is enhanced by the beta sliding clamp (dnaN) and clamp loader. The protein is DNA polymerase II (polB) of Escherichia coli (strain K12).